The sequence spans 254 residues: Type III pantothenate kinase (254 aa).

6–13 (DVGNTNTT) lines the ATP pocket. Substrate-binding positions include Tyr100 and 107-110 (GADR). Asp109 (proton acceptor) is an active-site residue. Asp129 serves as a coordination point for K(+). Thr132 provides a ligand contact to ATP. Thr184 serves as a coordination point for substrate.

It belongs to the type III pantothenate kinase family. In terms of assembly, homodimer. NH4(+) is required as a cofactor. K(+) serves as cofactor.

The protein localises to the cytoplasm. The catalysed reaction is (R)-pantothenate + ATP = (R)-4'-phosphopantothenate + ADP + H(+). The protein operates within cofactor biosynthesis; coenzyme A biosynthesis; CoA from (R)-pantothenate: step 1/5. In terms of biological role, catalyzes the phosphorylation of pantothenate (Pan), the first step in CoA biosynthesis. The sequence is that of Type III pantothenate kinase from Anaeromyxobacter dehalogenans (strain 2CP-1 / ATCC BAA-258).